The sequence spans 118 residues: MKKFSCGFEVTKEVIGGKWKGLVLYFLMNGPKRTSELKRIIPNITQKMLIQTLRELEASGLVSRKMYNQVPPKVEYSSTELGESLKPILQELCQWGGYYAEQEYAEGEYEIVQPEQLS.

Residues 6–104 enclose the HTH hxlR-type domain; the sequence is CGFEVTKEVI…WGGYYAEQEY (99 aa).

This is an uncharacterized protein from Bacillus subtilis (strain 168).